Consider the following 420-residue polypeptide: Septin-8-A (420 aa).

One can recognise a Septin-type G domain in the interval 39–305 (QGFCFNILCV…ELYRRCKLEE (267 aa)). The interval 49-56 (GETGIGKS) is G1 motif. Residues 49 to 56 (GETGIGKS), Gly-104, 185 to 193 (KADTISKSE), Gly-239, and Arg-254 each bind GTP. A G3 motif region spans residues 101–104 (DTVG). Residues 184 to 187 (AKAD) are G4 motif. The stretch at 321 to 407 (QETYEAKRKE…RRKVAAETLS (87 aa)) forms a coiled coil. A disordered region spans residues 393–420 (MNAFNRRKVAAETLSLSQPLKKDKDKKN).

Belongs to the TRAFAC class TrmE-Era-EngA-EngB-Septin-like GTPase superfamily. Septin GTPase family.

In Danio rerio (Zebrafish), this protein is Septin-8-A (sept8a).